Here is a 404-residue protein sequence, read N- to C-terminus: Tryptophan synthase beta chain (404 aa).

Lysine 98 is subject to N6-(pyridoxal phosphate)lysine.

It belongs to the TrpB family. As to quaternary structure, tetramer of two alpha and two beta chains. Requires pyridoxal 5'-phosphate as cofactor.

It catalyses the reaction (1S,2R)-1-C-(indol-3-yl)glycerol 3-phosphate + L-serine = D-glyceraldehyde 3-phosphate + L-tryptophan + H2O. It functions in the pathway amino-acid biosynthesis; L-tryptophan biosynthesis; L-tryptophan from chorismate: step 5/5. Its function is as follows. The beta subunit is responsible for the synthesis of L-tryptophan from indole and L-serine. This is Tryptophan synthase beta chain from Rhodopseudomonas palustris (strain ATCC BAA-98 / CGA009).